Consider the following 348-residue polypeptide: Sulfate/thiosulfate import ATP-binding protein CysA (348 aa).

Residues 3-237 (IRIQELCKQF…PSSPFVYSFV (235 aa)) form the ABC transporter domain. 35 to 42 (GPSGSGKT) serves as a coordination point for ATP.

The protein belongs to the ABC transporter superfamily. Sulfate/tungstate importer (TC 3.A.1.6) family. As to quaternary structure, the complex is composed of two ATP-binding proteins (CysA), two transmembrane proteins (CysT and CysW) and a solute-binding protein (CysP).

Its subcellular location is the cell inner membrane. It carries out the reaction sulfate(out) + ATP + H2O = sulfate(in) + ADP + phosphate + H(+). The catalysed reaction is thiosulfate(out) + ATP + H2O = thiosulfate(in) + ADP + phosphate + H(+). Part of the ABC transporter complex CysAWTP involved in sulfate/thiosulfate import. Responsible for energy coupling to the transport system. The polypeptide is Sulfate/thiosulfate import ATP-binding protein CysA (Xylella fastidiosa (strain 9a5c)).